An 88-amino-acid polypeptide reads, in one-letter code: UPF0297 protein RBAM_024500 (88 aa).

It belongs to the UPF0297 family.

This is UPF0297 protein RBAM_024500 from Bacillus velezensis (strain DSM 23117 / BGSC 10A6 / LMG 26770 / FZB42) (Bacillus amyloliquefaciens subsp. plantarum).